The primary structure comprises 99 residues: Large ribosomal subunit protein uL23 (99 aa).

The protein belongs to the universal ribosomal protein uL23 family. In terms of assembly, part of the 50S ribosomal subunit. Contacts protein L29, and trigger factor when it is bound to the ribosome.

In terms of biological role, one of the early assembly proteins it binds 23S rRNA. One of the proteins that surrounds the polypeptide exit tunnel on the outside of the ribosome. Forms the main docking site for trigger factor binding to the ribosome. The polypeptide is Large ribosomal subunit protein uL23 (Francisella philomiragia subsp. philomiragia (strain ATCC 25017 / CCUG 19701 / FSC 153 / O#319-036)).